The primary structure comprises 525 residues: Glutamate synthase large subunit-like protein YerD (525 aa).

A helical membrane pass occupies residues 4 to 24; it reads IIIALIAFIIGIIAIPIVLFA.

Belongs to the glutamate synthase family.

The protein resides in the cell membrane. This chain is Glutamate synthase large subunit-like protein YerD (yerD), found in Bacillus subtilis (strain 168).